Here is a 637-residue protein sequence, read N- to C-terminus: Acyl-CoA ligase cm3C (637 aa).

Residues 282–290 (TSGTSGRQK), 423–428 (HAWGLT), Asp-507, Arg-526, and Lys-624 contribute to the ATP site. Residues 353-423 (DMQRMLGSVA…SLQPSWEFLH (71 aa)) form an SBD1 region. The segment at 424-486 (AWGLTETCIV…YKAPNMFVGY (63 aa)) is SBD2.

It belongs to the ATP-dependent AMP-binding enzyme family.

It functions in the pathway secondary metabolite biosynthesis. In terms of biological role, acyl-CoA ligase; part of the gene cluster that mediates the biosynthesis of beauveriolides I and III, cyclodepsipeptides acting as inhibitors of the acyl-CoA:cholesterol acyltransferase. The HR-PKS cm3B initiates the biosynthesis of beauveriolides by iteratively catalyzing the formation of the linear polyketide chain. The ATP-dependent acetyl-CoA ligase cm3D converts the polyketide carboxylic acid to a CoA thioester which id shuttled to the first T domain in the NRPS cm3A by the acetyltransferase cm3C. Cm3A contains 13 domains and assembles the polyketide chain, L-phenylalanine, L-alanine, and D-leucine (or D-allo-isoleucine) to form beauveriolide I (or beauveriolide III). The production of both beauveriolides I and III suggests the substrate adaptability of cm3B, using different amino acids as substrates. The chain is Acyl-CoA ligase cm3C from Cordyceps militaris (strain CM01) (Caterpillar fungus).